Here is a 102-residue protein sequence, read N- to C-terminus: MAQKKIRIRLKAYEHRILDQSAEKIVETAKRTGAEIAGPIPLPTERTLYTILRSPHKHKDSREQFEMRTHKRLIDIVNPTDKTVDALRKLELPSGVAIEIKL.

This sequence belongs to the universal ribosomal protein uS10 family. As to quaternary structure, part of the 30S ribosomal subunit.

Involved in the binding of tRNA to the ribosomes. In Leuconostoc citreum (strain KM20), this protein is Small ribosomal subunit protein uS10.